The primary structure comprises 353 residues: MRLVLDAMGGDHAPAAPVEGGVLFARAHPGHEVLLVGDEAKVAPLLGKLRPPSNLQVHHASEVVEMDEHASTAFRRKRDSSLRVGFELVRDGRAEALVSAGNSGAVMAGGLLTLGRLPGVERPAIAALFPALKGGGRCLLLDAGANVDCKPTHLAQFAVMGEAYVRARMGVARPRVAVLSNGEESSKGTPLTREASGLLRRSDLDFVGYVEGKDLFSGEVQVVVTDGFTGNVVLKTSEGVGMGVIGMLRQAIERRGGLAEKVGAMLLQPALAGLRRVVDYAEYGGAPLLGIQGVGIVAHGRSTPRALFNALGAALAMAEGGVQAELTRCIGRAAAWLPTHPKGKRATDAGVSD.

This sequence belongs to the PlsX family. As to quaternary structure, homodimer. Probably interacts with PlsY.

Its subcellular location is the cytoplasm. The enzyme catalyses a fatty acyl-[ACP] + phosphate = an acyl phosphate + holo-[ACP]. The protein operates within lipid metabolism; phospholipid metabolism. In terms of biological role, catalyzes the reversible formation of acyl-phosphate (acyl-PO(4)) from acyl-[acyl-carrier-protein] (acyl-ACP). This enzyme utilizes acyl-ACP as fatty acyl donor, but not acyl-CoA. In Myxococcus xanthus (strain DK1622), this protein is Phosphate acyltransferase.